The following is a 372-amino-acid chain: Ligninase B (372 aa).

An N-terminal signal peptide occupies residues 1–21; that stretch reads MAFKQLFAAISLALSLSAANA. Residues 22–28 constitute a propeptide that is removed on maturation; sequence AAVIEKR. 4 disulfides stabilise this stretch: Cys-31/Cys-43, Cys-42/Cys-313, Cys-62/Cys-148, and Cys-277/Cys-345. Catalysis depends on His-75, which acts as the Proton acceptor. Residues Asp-76, Gly-94, Asp-96, and Ser-98 each contribute to the Ca(2+) site. His-204 is a binding site for heme b. The Ca(2+) site is built by Ser-205, Asp-222, Thr-224, Ile-227, and Asp-229. N-linked (GlcNAc...) asparagine glycosylation is present at Asn-285. Positions 350-361 are enriched in low complexity; it reads FPTLTTLPGPET. Residues 350 to 372 are disordered; sequence FPTLTTLPGPETSVQRIPPPPGA.

Belongs to the peroxidase family. Ligninase subfamily. Heme b is required as a cofactor. The cofactor is Ca(2+).

It catalyses the reaction 1-(3,4-dimethoxyphenyl)-2-(2-methoxyphenoxy)propane-1,3-diol + H2O2 = 3,4-dimethoxybenzaldehyde + guaiacol + glycolaldehyde + H2O. It carries out the reaction 2 (3,4-dimethoxyphenyl)methanol + H2O2 = 2 (3,4-dimethoxyphenyl)methanol radical + 2 H2O. It functions in the pathway secondary metabolite metabolism; lignin degradation. Depolymerization of lignin. Catalyzes the C(alpha)-C(beta) cleavage of the propyl side chains of lignin. The protein is Ligninase B (LIPB) of Phanerodontia chrysosporium (White-rot fungus).